The sequence spans 120 residues: MSSKSKFVRRQRIKRRVRSVVSGTEQRPRLTVFRSLSHIYAQLIDDVNGHTLVAASSMPSKGASLLKGKKSDVSREVGKALAEKAKAKGIDAVVFDRNGYRYHGRVKALAEGAREGGLKF.

Belongs to the universal ribosomal protein uL18 family. In terms of assembly, part of the 50S ribosomal subunit; part of the 5S rRNA/L5/L18/L25 subcomplex. Contacts the 5S and 23S rRNAs.

This is one of the proteins that bind and probably mediate the attachment of the 5S RNA into the large ribosomal subunit, where it forms part of the central protuberance. The polypeptide is Large ribosomal subunit protein uL18 (Chloroherpeton thalassium (strain ATCC 35110 / GB-78)).